A 316-amino-acid chain; its full sequence is L-lactate dehydrogenase 3 (316 aa).

Residues Val16, Asp37, Arg42, and Tyr68 each coordinate NAD(+). Arg91 is a substrate binding site. NAD(+) contacts are provided by residues Ser104, 121 to 123 (ASN), and Thr146. A substrate-binding site is contributed by 123–126 (NPVD). Residue 151–154 (DSSR) participates in substrate binding. Positions 156 and 171 each coordinate beta-D-fructose 1,6-bisphosphate. The active-site Proton acceptor is His178. Thr233 is a binding site for substrate.

Belongs to the LDH/MDH superfamily. LDH family. Homotetramer.

It is found in the cytoplasm. The enzyme catalyses (S)-lactate + NAD(+) = pyruvate + NADH + H(+). It functions in the pathway fermentation; pyruvate fermentation to lactate; (S)-lactate from pyruvate: step 1/1. Allosterically activated by fructose 1,6-bisphosphate (FBP). Its function is as follows. Catalyzes the conversion of lactate to pyruvate. The chain is L-lactate dehydrogenase 3 from Bacillus anthracis.